A 222-amino-acid chain; its full sequence is uncharacterized protein (222 aa).

The next 4 helical transmembrane spans lie at 25–45 (LLWL…PATA), 80–100 (LLGA…ALIY), 111–131 (FAIM…FPLL), and 160–180 (LALT…VPFF).

The protein localises to the cell membrane. This is an uncharacterized protein from Bacillus subtilis (strain 168).